The sequence spans 852 residues: Disease resistance RPP13-like protein 4 (852 aa).

Residues 17 to 68 (LEEKGRTVSDYRKQLEDLQSELKYMQSFLKDAERQKRTNETLRTLVADLREL) are a coiled coil. Residues R149, V161, 189-196 (GMGGLGKT), R297, and K363 each bind ADP. One can recognise an NB-ARC domain in the interval 164–410 (EGDKRKIKEW…MSSLQLSYDE (247 aa)). 6 LRR repeats span residues 558 to 581 (CKYLRVLDISKSIFDAPLSEILDE), 585 to 609 (LQHLACLSLSNTHPLIQFPRSMEDL), 633 to 657 (FKKLLVLDMTNCGSLECFPKGIGSL), 683 to 706 (LTNLRKLGLSLTRGDQIEEEELDS), 763 to 786 (LPMLRYMSICSGNLVKMQEPFWGN), and 798 to 824 (LSSLSDLDMDWEVLQQSMPYLRTVTAN).

It belongs to the disease resistance NB-LRR family. RPP13 subfamily. As to quaternary structure, interacts with ZED1/ZRK5. Component of a stable high-order oligomeric complex made of RKS1 and RPP13L4/ZAR1 which recruits ZED1-related kinases (e.g. uridylylated PBL2 and acetylated ZED1/ZRK5) in the presence of ATP and pathogenic bacteria type III secreted effector (T3SE) proteins (e.g. Pseudomonas syringae HopZ1a and HopF2a and Xanthomonas campestris pv. campestris (Xcc) XopAC/AvrAC) to form a wheel-like pentameric resistosome; this complex triggers immunity toward pathogenic bacteria (e.g. X.campestris and P.syringae), especially in vascular tissues. Interacts with RKS1, ZED1/ZRK5, ZRK3, ZRK6 and ZRK15.

Its subcellular location is the cell membrane. The protein resides in the nucleus. With respect to regulation, exhibits autoinhibition activity. Functionally, CC-NB-LRR receptor-like protein required for recognition of pathogenic bacteria type III effectors (T3E) such as Pseudomonas syringae HopZ1a and HopF2a and Xanthomonas campestris pv. campestris (Xcc) XopAC/AvrAC; this recognition requires ZED1-related kinases (e.g. PBL2, ZRK3 and ZED1/ZRK5). Confers allele-specific recognition and virulence attenuation of HopZ1a. Immunity mediated by RPP13L4/ZAR1 is independent of several genes required by other resistance protein signaling pathways such as NDR1 and RAR1. Together with ZED1/ZRK5, involved in the regulation of the ambient temperature-sensitive intersection of growth and immune response in the absence of pathogens. This Arabidopsis thaliana (Mouse-ear cress) protein is Disease resistance RPP13-like protein 4 (RPP13L4).